The following is a 378-amino-acid chain: Metacaspase-1B (378 aa).

Positions 1–70 (MCSPPPYPPQ…QEAQSFGGGA (70 aa)) are disordered. A compositionally biased stretch (low complexity) spans 10–29 (QGHHYPPSPHGSYYSPTPYG). Catalysis depends on residues His-169 and Cys-225.

This sequence belongs to the peptidase C14B family.

Involved in cell death (apoptosis). The protein is Metacaspase-1B (casB) of Aspergillus terreus (strain NIH 2624 / FGSC A1156).